We begin with the raw amino-acid sequence, 276 residues long: Small ribosomal subunit protein uS2 (276 aa).

The segment at 255-276 is disordered; sequence ASATATAAPTEAGAPEPTTDPS.

The protein belongs to the universal ribosomal protein uS2 family.

This Mycolicibacterium paratuberculosis (strain ATCC BAA-968 / K-10) (Mycobacterium paratuberculosis) protein is Small ribosomal subunit protein uS2.